Reading from the N-terminus, the 448-residue chain is Probable glycine dehydrogenase (decarboxylating) subunit 1 (448 aa).

This sequence belongs to the GcvP family. N-terminal subunit subfamily. In terms of assembly, the glycine cleavage system is composed of four proteins: P, T, L and H. In this organism, the P 'protein' is a heterodimer of two subunits.

The catalysed reaction is N(6)-[(R)-lipoyl]-L-lysyl-[glycine-cleavage complex H protein] + glycine + H(+) = N(6)-[(R)-S(8)-aminomethyldihydrolipoyl]-L-lysyl-[glycine-cleavage complex H protein] + CO2. Its function is as follows. The glycine cleavage system catalyzes the degradation of glycine. The P protein binds the alpha-amino group of glycine through its pyridoxal phosphate cofactor; CO(2) is released and the remaining methylamine moiety is then transferred to the lipoamide cofactor of the H protein. The chain is Probable glycine dehydrogenase (decarboxylating) subunit 1 from Lysinibacillus sphaericus (strain C3-41).